Here is a 270-residue protein sequence, read N- to C-terminus: 3-methyl-2-oxobutanoate hydroxymethyltransferase (270 aa).

The Mg(2+) site is built by aspartate 50 and aspartate 89. 3-methyl-2-oxobutanoate contacts are provided by residues 50-51 (DS), aspartate 89, and lysine 118. Residue glutamate 120 participates in Mg(2+) binding. Glutamate 187 functions as the Proton acceptor in the catalytic mechanism.

It belongs to the PanB family. In terms of assembly, homodecamer; pentamer of dimers. Requires Mg(2+) as cofactor.

The protein resides in the cytoplasm. The enzyme catalyses 3-methyl-2-oxobutanoate + (6R)-5,10-methylene-5,6,7,8-tetrahydrofolate + H2O = 2-dehydropantoate + (6S)-5,6,7,8-tetrahydrofolate. It functions in the pathway cofactor biosynthesis; (R)-pantothenate biosynthesis; (R)-pantoate from 3-methyl-2-oxobutanoate: step 1/2. Its function is as follows. Catalyzes the reversible reaction in which hydroxymethyl group from 5,10-methylenetetrahydrofolate is transferred onto alpha-ketoisovalerate to form ketopantoate. In Helicobacter pylori (strain P12), this protein is 3-methyl-2-oxobutanoate hydroxymethyltransferase.